Consider the following 104-residue polypeptide: Gallinacin-11 (104 aa).

Positions 1–22 (MKLFSCLMALLLFLLQAVPGLG) are cleaved as a signal peptide. Intrachain disulfides connect cysteine 30–cysteine 60, cysteine 37–cysteine 53, and cysteine 43–cysteine 61.

It belongs to the beta-defensin family. As to expression, detected in outer membrane of the vitelline layer of the egg (at protein level). Expressed in the liver, gall bladder, kidney, testis, ovary and male and female reproductive tracts. Expressed in the ovarian stroma, but not in the ovarian follicles. No expression is detected in bone marrow.

It is found in the secreted. Its subcellular location is the cytoplasmic granule. Its function is as follows. Has bactericidal activity. This Gallus gallus (Chicken) protein is Gallinacin-11 (GAL11).